The chain runs to 454 residues: Bifunctional protein GlmU (454 aa).

The interval 1–231 (MSRPTVSLIV…EAETLGVNTR (231 aa)) is pyrophosphorylase. Residues 11-14 (LAAG), K25, Q78, 83-84 (GT), 106-108 (YGD), G143, E157, N172, and N229 contribute to the UDP-N-acetyl-alpha-D-glucosamine site. D108 contacts Mg(2+). N229 provides a ligand contact to Mg(2+). The linker stretch occupies residues 232–252 (AQLAAAEAEFQRRARAAALED). Residues 253 to 454 (GVTLTAPDTV…ARDASKKGTN (202 aa)) are N-acetyltransferase. UDP-N-acetyl-alpha-D-glucosamine-binding residues include R318 and K336. The active-site Proton acceptor is the H348. Residues Y351 and N362 each coordinate UDP-N-acetyl-alpha-D-glucosamine. Residues A365, 371–372 (NY), S390, S408, and R425 contribute to the acetyl-CoA site.

The protein in the N-terminal section; belongs to the N-acetylglucosamine-1-phosphate uridyltransferase family. This sequence in the C-terminal section; belongs to the transferase hexapeptide repeat family. Homotrimer. Mg(2+) is required as a cofactor.

The protein resides in the cytoplasm. It carries out the reaction alpha-D-glucosamine 1-phosphate + acetyl-CoA = N-acetyl-alpha-D-glucosamine 1-phosphate + CoA + H(+). The enzyme catalyses N-acetyl-alpha-D-glucosamine 1-phosphate + UTP + H(+) = UDP-N-acetyl-alpha-D-glucosamine + diphosphate. It functions in the pathway nucleotide-sugar biosynthesis; UDP-N-acetyl-alpha-D-glucosamine biosynthesis; N-acetyl-alpha-D-glucosamine 1-phosphate from alpha-D-glucosamine 6-phosphate (route II): step 2/2. The protein operates within nucleotide-sugar biosynthesis; UDP-N-acetyl-alpha-D-glucosamine biosynthesis; UDP-N-acetyl-alpha-D-glucosamine from N-acetyl-alpha-D-glucosamine 1-phosphate: step 1/1. It participates in bacterial outer membrane biogenesis; LPS lipid A biosynthesis. In terms of biological role, catalyzes the last two sequential reactions in the de novo biosynthetic pathway for UDP-N-acetylglucosamine (UDP-GlcNAc). The C-terminal domain catalyzes the transfer of acetyl group from acetyl coenzyme A to glucosamine-1-phosphate (GlcN-1-P) to produce N-acetylglucosamine-1-phosphate (GlcNAc-1-P), which is converted into UDP-GlcNAc by the transfer of uridine 5-monophosphate (from uridine 5-triphosphate), a reaction catalyzed by the N-terminal domain. This Cereibacter sphaeroides (strain ATCC 17025 / ATH 2.4.3) (Rhodobacter sphaeroides) protein is Bifunctional protein GlmU.